We begin with the raw amino-acid sequence, 428 residues long: Protein CLP1 homolog (428 aa).

ATP is bound by residues Glu-22, Lys-63, and 127 to 132 (DVGKST).

The protein belongs to the Clp1 family. Clp1 subfamily.

The protein localises to the nucleus. Its function is as follows. Required for endonucleolytic cleavage during polyadenylation-dependent pre-mRNA 3'-end formation. The polypeptide is Protein CLP1 homolog (Nematostella vectensis (Starlet sea anemone)).